The primary structure comprises 140 residues: T cell receptor alpha chain constant (140 aa).

The region spanning 19-107 (KSVCLFTDFD…LVEKSFETDT (89 aa)) is the Ig-like C1-type domain. Cys-22 and Cys-72 form a disulfide bridge. Asn-32, Asn-66, Asn-77, and Asn-113 each carry an N-linked (GlcNAc...) asparagine glycan. The tract at residues 94-115 (CDVKLVEKSFETDTNLNFQNLS) is connecting peptide. Residues 116 to 138 (VIGFRILLLKVAGFNLLMTLRLW) form a helical membrane-spanning segment. The Cytoplasmic portion of the chain corresponds to 139 to 140 (SS).

As to quaternary structure, alpha-beta TR is a heterodimer composed of an alpha and beta chain; disulfide-linked. The alpha-beta TR is associated with the transmembrane signaling CD3 coreceptor proteins to form the TR-CD3 (TcR or TCR). The assembly of alpha-beta TR heterodimers with CD3 occurs in the endoplasmic reticulum where a single alpha-beta TR heterodimer associates with one CD3D-CD3E heterodimer, one CD3G-CD3E heterodimer and one CD247 homodimer forming a stable octameric structure. CD3D-CD3E and CD3G-CD3E heterodimers preferentially associate with TR alpha and TR beta chains, respectively. The association of the CD247 homodimer is the last step of TcR assembly in the endoplasmic reticulum and is required for transport to the cell surface.

It is found in the cell membrane. Its function is as follows. Constant region of T cell receptor (TR) alpha chain. Alpha-beta T cell receptors are antigen specific receptors which are essential to the immune response and are present on the cell surface of T lymphocytes. Recognize peptide-major histocompatibility (MH) (pMH) complexes that are displayed by antigen presenting cells (APC), a prerequisite for efficient T cell adaptive immunity against pathogens. Binding of alpha-beta TR to pMH complex initiates TR-CD3 clustering on the cell surface and intracellular activation of LCK that phosphorylates the ITAM motifs of CD3G, CD3D, CD3E and CD247 enabling the recruitment of ZAP70. In turn, ZAP70 phosphorylates LAT, which recruits numerous signaling molecules to form the LAT signalosome. The LAT signalosome propagates signal branching to three major signaling pathways, the calcium, the mitogen-activated protein kinase (MAPK) kinase and the nuclear factor NF-kappa-B (NF-kB) pathways, leading to the mobilization of transcription factors that are critical for gene expression and essential for T cell growth and differentiation. The T cell repertoire is generated in the thymus, by V-(D)-J rearrangement. This repertoire is then shaped by intrathymic selection events to generate a peripheral T cell pool of self-MH restricted, non-autoaggressive T cells. Post-thymic interaction of alpha-beta TR with the pMH complexes shapes TR structural and functional avidity. The chain is T cell receptor alpha chain constant from Homo sapiens (Human).